Consider the following 247-residue polypeptide: Suppressor of silencing P0 (247 aa).

In terms of domain architecture, F-box-like spans 76-95 (LPRHLHYECLEWGLLCGTHP).

This sequence belongs to the polerovirus P0 protein family.

In terms of biological role, suppressor of RNA-mediated gene silencing, also known as post-transcriptional gene silencing (PTGS), a mechanism of plant viral defense that limits the accumulation of viral RNAs. The P0 protein suppresses local PTGS using its F-box-like domain to mediate destabilization and degradation of the AGO1 protein, although not via an interaction with host SKP1A. Participates, together with the proteins P1 and P7, in the inhibition of the induction of aphid-induced host phytohormones. This could play a role in the attraction to the infected plants by aphids. In Potato leafroll virus (strain Potato/Scotland/strain 1/1984) (PLrV), this protein is Suppressor of silencing P0.